The chain runs to 399 residues: Proteasome-activating nucleotidase (399 aa).

The stretch at 19 to 60 (ITYLKRRIRQLELQVRMLEADKERLERELSRLRSEMSRLRQP) forms a coiled coil. ATP is bound by residues 184 to 189 (GCGKTL) and His-323. The tract at residues 397–399 (IYG) is docks into pockets in the proteasome alpha-ring to cause gate opening.

It belongs to the AAA ATPase family. In terms of assembly, homohexamer. The hexameric complex has a two-ring architecture resembling a top hat that caps the 20S proteasome core at one or both ends. Upon ATP-binding, the C-terminus of PAN interacts with the alpha-rings of the proteasome core by binding to the intersubunit pockets.

It is found in the cytoplasm. ATPase which is responsible for recognizing, binding, unfolding and translocation of substrate proteins into the archaeal 20S proteasome core particle. Is essential for opening the gate of the 20S proteasome via an interaction with its C-terminus, thereby allowing substrate entry and access to the site of proteolysis. Thus, the C-termini of the proteasomal ATPase function like a 'key in a lock' to induce gate opening and therefore regulate proteolysis. Unfolding activity requires energy from ATP hydrolysis, whereas ATP binding alone promotes ATPase-20S proteasome association which triggers gate opening, and supports translocation of unfolded substrates. The sequence is that of Proteasome-activating nucleotidase from Pyrococcus horikoshii (strain ATCC 700860 / DSM 12428 / JCM 9974 / NBRC 100139 / OT-3).